Here is a 201-residue protein sequence, read N- to C-terminus: MGSRKCGGCLSCLLIPLALWSIIVNILLYFPNGQTSYASSNKLTNYVWYFEGICFSGIMMLIVTTVLLVLENNNNYKCCQSENCSKKYVTLLSIIFSSLGIAFSGYCLVISALGLVQGPYCRTLDGWEYAFEGTAGRFLTDSSIWIQCLEPAHVVEWNIILFSILITLSGLQVIICLIRVVMQLSKILCGSYSVIFQPGII.

Residues 1–9 lie on the Cytoplasmic side of the membrane; it reads MGSRKCGGC. The helical transmembrane segment at 10-30 threads the bilayer; the sequence is LSCLLIPLALWSIIVNILLYF. At 31–49 the chain is on the extracellular side; that stretch reads PNGQTSYASSNKLTNYVWY. Residues 50 to 70 traverse the membrane as a helical segment; that stretch reads FEGICFSGIMMLIVTTVLLVL. The Cytoplasmic portion of the chain corresponds to 71 to 93; the sequence is ENNNNYKCCQSENCSKKYVTLLS. A helical membrane pass occupies residues 94–114; sequence IIFSSLGIAFSGYCLVISALG. Over 115–157 the chain is Extracellular; it reads LVQGPYCRTLDGWEYAFEGTAGRFLTDSSIWIQCLEPAHVVEW. Residues 158–178 form a helical membrane-spanning segment; sequence NIILFSILITLSGLQVIICLI. Over 179-201 the chain is Cytoplasmic; that stretch reads RVVMQLSKILCGSYSVIFQPGII.

The protein belongs to the L6 tetraspanin family.

The protein resides in the membrane. This is Transmembrane 4 L6 family member 18 (TM4SF18) from Homo sapiens (Human).